Consider the following 562-residue polypeptide: Undecaprenyl phosphate-alpha-4-amino-4-deoxy-L-arabinose arabinosyl transferase (562 aa).

12 helical membrane-spanning segments follow: residues 14 to 34, 91 to 111, 120 to 140, 142 to 162, 186 to 206, 215 to 235, 267 to 287, 302 to 322, 324 to 344, 354 to 374, 395 to 415, and 425 to 445; these read IKFS…PLNY, FSVR…IYLF, ILSL…IIGT, SVLD…FWLA, FITK…IWLF, TIIH…PWIY, PFWY…GFLF, IEFY…ISKG, LPTY…KNIE, LLKI…IFII, LILC…IIFN, and LSII…IIYA.

The protein belongs to the glycosyltransferase 83 family.

It is found in the cell inner membrane. The catalysed reaction is 4-amino-4-deoxy-alpha-L-arabinopyranosyl di-trans,octa-cis-undecaprenyl phosphate + lipid IVA = lipid IIA + di-trans,octa-cis-undecaprenyl phosphate.. The protein operates within lipopolysaccharide metabolism; 4-amino-4-deoxy-beta-L-arabinose-lipid A biosynthesis. Functionally, catalyzes the transfer of the L-Ara4N moiety of the glycolipid undecaprenyl phosphate-alpha-L-Ara4N to lipid A. The modified arabinose is attached to lipid A and is required for resistance to polymyxin and cationic antimicrobial peptides. The protein is Undecaprenyl phosphate-alpha-4-amino-4-deoxy-L-arabinose arabinosyl transferase of Wigglesworthia glossinidia brevipalpis.